A 65-amino-acid polypeptide reads, in one-letter code: Large ribosomal subunit protein bL35 (65 aa).

This sequence belongs to the bacterial ribosomal protein bL35 family.

The protein is Large ribosomal subunit protein bL35 of Burkholderia ambifaria (strain MC40-6).